The primary structure comprises 352 residues: Holliday junction branch migration complex subunit RuvB (352 aa).

The tract at residues 5–191 (TDDFSEQRII…FGIVARLEFY (187 aa)) is large ATPase domain (RuvB-L). Residues Leu30, Arg31, Gly72, Lys75, Thr76, Thr77, 138-140 (EDY), Arg181, Tyr191, and Arg228 each bind ATP. Residue Thr76 coordinates Mg(2+). Residues 192–262 (TPLELTKIVT…MADAALVMLD (71 aa)) are small ATPAse domain (RuvB-S). The interval 265–352 (PVGFDLMDRK…GPNGDLWAGQ (88 aa)) is head domain (RuvB-H). Positions 301, 320, and 325 each coordinate DNA.

Belongs to the RuvB family. Homohexamer. Forms an RuvA(8)-RuvB(12)-Holliday junction (HJ) complex. HJ DNA is sandwiched between 2 RuvA tetramers; dsDNA enters through RuvA and exits via RuvB. An RuvB hexamer assembles on each DNA strand where it exits the tetramer. Each RuvB hexamer is contacted by two RuvA subunits (via domain III) on 2 adjacent RuvB subunits; this complex drives branch migration. In the full resolvosome a probable DNA-RuvA(4)-RuvB(12)-RuvC(2) complex forms which resolves the HJ.

It localises to the cytoplasm. It catalyses the reaction ATP + H2O = ADP + phosphate + H(+). Its function is as follows. The RuvA-RuvB-RuvC complex processes Holliday junction (HJ) DNA during genetic recombination and DNA repair, while the RuvA-RuvB complex plays an important role in the rescue of blocked DNA replication forks via replication fork reversal (RFR). RuvA specifically binds to HJ cruciform DNA, conferring on it an open structure. The RuvB hexamer acts as an ATP-dependent pump, pulling dsDNA into and through the RuvAB complex. RuvB forms 2 homohexamers on either side of HJ DNA bound by 1 or 2 RuvA tetramers; 4 subunits per hexamer contact DNA at a time. Coordinated motions by a converter formed by DNA-disengaged RuvB subunits stimulates ATP hydrolysis and nucleotide exchange. Immobilization of the converter enables RuvB to convert the ATP-contained energy into a lever motion, pulling 2 nucleotides of DNA out of the RuvA tetramer per ATP hydrolyzed, thus driving DNA branch migration. The RuvB motors rotate together with the DNA substrate, which together with the progressing nucleotide cycle form the mechanistic basis for DNA recombination by continuous HJ branch migration. Branch migration allows RuvC to scan DNA until it finds its consensus sequence, where it cleaves and resolves cruciform DNA. The protein is Holliday junction branch migration complex subunit RuvB of Janthinobacterium sp. (strain Marseille) (Minibacterium massiliensis).